The following is a 271-amino-acid chain: tRNA pseudouridine synthase A (271 aa).

The active-site Nucleophile is D51. Position 109 (Y109) interacts with substrate.

The protein belongs to the tRNA pseudouridine synthase TruA family. Homodimer.

It catalyses the reaction uridine(38/39/40) in tRNA = pseudouridine(38/39/40) in tRNA. Functionally, formation of pseudouridine at positions 38, 39 and 40 in the anticodon stem and loop of transfer RNAs. The sequence is that of tRNA pseudouridine synthase A from Methylococcus capsulatus (strain ATCC 33009 / NCIMB 11132 / Bath).